The chain runs to 414 residues: Cell division protein FtsA (414 aa).

This sequence belongs to the FtsA/MreB family. Self-interacts. Interacts with FtsZ.

It is found in the cell inner membrane. In terms of biological role, cell division protein that is involved in the assembly of the Z ring. May serve as a membrane anchor for the Z ring. The chain is Cell division protein FtsA from Neisseria meningitidis serogroup B (strain ATCC BAA-335 / MC58).